Here is a 266-residue protein sequence, read N- to C-terminus: Non-structural maintenance of chromosomes element 1 homolog (266 aa).

Residues 1 to 102 form an interaction with NSMCE3 region; it reads MQGSTRRAGA…SVSKMATDFA (102 aa). The RING-type; atypical zinc-finger motif lies at 191–232; the sequence is CNICHSLLIQGQSCETCGIRMHLPCVAKYFQSTAEPRCPHCN. The tract at residues 246-266 is disordered; the sequence is EKEREAGISKSSRKSLRTRQH. The segment covering 256-266 has biased composition (basic residues); sequence SSRKSLRTRQH.

It belongs to the NSE1 family. Component of the SMC5-SMC6 complex which consists at least of SMC5, SMC6, NSMCE2, NSMCE1, NSMCE4A or EID3 and NSMCE3. NSMCE1, NSMCE4A or EID3 and NSMCE3 probably form a subcomplex that bridges the head domains of the SMC5-SMC6 heterodimer. Interacts with NSMCE3. Post-translationally, ubiquitinated.

The protein localises to the nucleus. It localises to the chromosome. The protein resides in the telomere. The catalysed reaction is S-ubiquitinyl-[E2 ubiquitin-conjugating enzyme]-L-cysteine + [acceptor protein]-L-lysine = [E2 ubiquitin-conjugating enzyme]-L-cysteine + N(6)-ubiquitinyl-[acceptor protein]-L-lysine.. In terms of biological role, RING-type zinc finger-containing E3 ubiquitin ligase that assembles with melanoma antigen protein (MAGE) to catalyze the direct transfer of ubiquitin from E2 ubiquitin-conjugating enzyme to a specific substrate. Within MAGE-RING ubiquitin ligase complex, MAGE stimulates and specifies ubiquitin ligase activity likely through recruitment and/or stabilization of the E2 ubiquitin-conjugating enzyme at the E3:substrate complex. Involved in maintenance of genome integrity, DNA damage response and DNA repair. NSMCE3/MAGEG1 and NSMCE1 ubiquitin ligase are components of SMC5-SMC6 complex and may positively regulate homologous recombination-mediated DNA repair. The chain is Non-structural maintenance of chromosomes element 1 homolog (Nsmce1) from Rattus norvegicus (Rat).